A 101-amino-acid polypeptide reads, in one-letter code: MKHKLSAILMAFMLTTPAAFAAPEATNGTEATTGTTGTTTTTTGATTTATTTGGVAAGAVGTATVVGVATAVGVATLAVVAANDSGDGGSHNTSTTTSTTR.

A signal peptide spans 1-21 (MKHKLSAILMAFMLTTPAAFA). At 22–59 (APEATNGTEATTGTTGTTTTTTGATTTATTTGGVAAGA) the chain is on the cytoplasmic side. Positions 24–45 (EATNGTEATTGTTGTTTTTTGA) are disordered. The chain crosses the membrane as a helical span at residues 60-80 (VGTATVVGVATAVGVATLAVV). Residues 81 to 101 (AANDSGDGGSHNTSTTTSTTR) lie on the Periplasmic side of the membrane. The disordered stretch occupies residues 82-101 (ANDSGDGGSHNTSTTTSTTR).

The protein resides in the cell inner membrane. The sequence is that of Threonine-rich inner membrane protein GfcA (gfcA) from Escherichia coli (strain K12).